A 585-amino-acid polypeptide reads, in one-letter code: MASPGSGFWSFGSEDGSGDPENSGTARAWCQVAQKFTGGIGNKLCALLYGDAEKPAESGGSQPPRTTSRKATCACNQKPCNCPKAEVNYAFLHATDLLPACDGERPTLAFLQDVMDILLQYVVKSFDRSTKVIDFHYPNELLQEYNWELADQPQNLEEILMHCQTTLKYAIKTGHPRYFNQLSTGLDMVGLAADWLTSTANTNMFTYEIAPVFVLLEYVTLKKMREIIGWPGGSGDGIFSPGGAISNMYAMLIARFKMFPEVKEKGMAAVPRLIAFTSEHSHFSLKKGAAALGIGTDSVILIKCDERGKMIPSDLERRILEAKQKGFVPFLVSATAGTTVYGAFDPLLAVADICKKYKIWMHVDAAWGGGLLMSRKHKWKLSGVERANSVTWNPHKMMGVPLQCSALLVREEGLMQSCNQMHASYLFQQDKHYDLSYDTGDKALQCGRHVDVFKLWLMWRAKGTTGFEAHIDKCLELAEYLYNIIKNREGYEMVFDGKPQHTNVCFWYVPPSLRVLDNNEERMSRLSKVAPVIKARMMESGTTMVSYQPLGDKVNFFRMVISNPAATHQDIDFLIEEIERLGQDL.

Residues 1–24 (MASPGSGFWSFGSEDGSGDPENSG) are disordered. Phosphoserine occurs at positions 3, 6, 10, and 13. Residues Cys30 and Cys45 are each lipidated (S-palmitoyl cysteine). 181-183 (QLS) provides a ligand contact to substrate. The residue at position 396 (Lys396) is an N6-(pyridoxal phosphate)lysine. Arg558 is a substrate binding site.

Belongs to the group II decarboxylase family. As to quaternary structure, homodimer. It depends on pyridoxal 5'-phosphate as a cofactor. Phosphorylated; which does not affect kinetic parameters or subcellular location. Post-translationally, palmitoylated; which is required for presynaptic clustering.

The protein localises to the cytoplasm. The protein resides in the cytosol. It localises to the cytoplasmic vesicle. Its subcellular location is the presynaptic cell membrane. It is found in the golgi apparatus membrane. The enzyme catalyses L-glutamate + H(+) = 4-aminobutanoate + CO2. Catalyzes the production of GABA. This chain is Glutamate decarboxylase 2 (GAD2), found in Sus scrofa (Pig).